The following is a 255-amino-acid chain: Proteasome subunit alpha type-3 (255 aa).

S2 is modified (N-acetylserine). K57, K206, and K230 each carry N6-acetyllysine. S243 and S250 each carry phosphoserine.

This sequence belongs to the peptidase T1A family. As to quaternary structure, the 26S proteasome consists of a 20S proteasome core and two 19S regulatory subunits. The 20S proteasome core is a barrel-shaped complex made of 28 subunits that are arranged in four stacked rings. The two outer rings are each formed by seven alpha subunits, and the two inner rings are formed by seven beta subunits. The proteolytic activity is exerted by three beta-subunits PSMB5, PSMB6 and PSMB7. Interacts with AURKB. Interacts with CDKN1A. Interacts with MDM2 and RB1. Interacts with the C-terminus of TBXA2R isoform 2. Interacts with DNAJB2. As to expression, detected in liver (at protein level).

It is found in the cytoplasm. It localises to the nucleus. Functionally, component of the 20S core proteasome complex involved in the proteolytic degradation of most intracellular proteins. This complex plays numerous essential roles within the cell by associating with different regulatory particles. Associated with two 19S regulatory particles, forms the 26S proteasome and thus participates in the ATP-dependent degradation of ubiquitinated proteins. The 26S proteasome plays a key role in the maintenance of protein homeostasis by removing misfolded or damaged proteins that could impair cellular functions, and by removing proteins whose functions are no longer required. Associated with the PA200 or PA28, the 20S proteasome mediates ubiquitin-independent protein degradation. This type of proteolysis is required in several pathways including spermatogenesis (20S-PA200 complex) or generation of a subset of MHC class I-presented antigenic peptides (20S-PA28 complex). Binds to the C-terminus of CDKN1A and thereby mediates its degradation. Negatively regulates the membrane trafficking of the cell-surface thromboxane A2 receptor (TBXA2R) isoform 2. This chain is Proteasome subunit alpha type-3 (Psma3), found in Mus musculus (Mouse).